A 341-amino-acid polypeptide reads, in one-letter code: L-threonine 3-dehydrogenase (341 aa).

Cys38 provides a ligand contact to Zn(2+). Catalysis depends on charge relay system residues Thr40 and His43. The Zn(2+) site is built by His63, Glu64, Cys93, Cys96, Cys99, and Cys107. NAD(+)-binding positions include Ile175, Asp195, Arg200, 262-264 (LGI), and 286-287 (IY).

The protein belongs to the zinc-containing alcohol dehydrogenase family. In terms of assembly, homotetramer. Zn(2+) serves as cofactor.

It localises to the cytoplasm. The enzyme catalyses L-threonine + NAD(+) = (2S)-2-amino-3-oxobutanoate + NADH + H(+). It functions in the pathway amino-acid degradation; L-threonine degradation via oxydo-reductase pathway; glycine from L-threonine: step 1/2. Catalyzes the NAD(+)-dependent oxidation of L-threonine to 2-amino-3-ketobutyrate. This chain is L-threonine 3-dehydrogenase, found in Idiomarina loihiensis (strain ATCC BAA-735 / DSM 15497 / L2-TR).